The following is a 214-amino-acid chain: Imidazole glycerol phosphate synthase subunit HisH (214 aa).

The Glutamine amidotransferase type-1 domain occupies 3–211 (IIAVIDYDMG…VEQVQATLAT (209 aa)). Cysteine 81 acts as the Nucleophile in catalysis. Residues histidine 186 and glutamate 188 contribute to the active site.

Heterodimer of HisH and HisF.

The protein resides in the cytoplasm. It carries out the reaction 5-[(5-phospho-1-deoxy-D-ribulos-1-ylimino)methylamino]-1-(5-phospho-beta-D-ribosyl)imidazole-4-carboxamide + L-glutamine = D-erythro-1-(imidazol-4-yl)glycerol 3-phosphate + 5-amino-1-(5-phospho-beta-D-ribosyl)imidazole-4-carboxamide + L-glutamate + H(+). It catalyses the reaction L-glutamine + H2O = L-glutamate + NH4(+). It participates in amino-acid biosynthesis; L-histidine biosynthesis; L-histidine from 5-phospho-alpha-D-ribose 1-diphosphate: step 5/9. In terms of biological role, IGPS catalyzes the conversion of PRFAR and glutamine to IGP, AICAR and glutamate. The HisH subunit catalyzes the hydrolysis of glutamine to glutamate and ammonia as part of the synthesis of IGP and AICAR. The resulting ammonia molecule is channeled to the active site of HisF. This Acaryochloris marina (strain MBIC 11017) protein is Imidazole glycerol phosphate synthase subunit HisH.